A 698-amino-acid polypeptide reads, in one-letter code: Probable xyloglucan glycosyltransferase 2 (698 aa).

2 helical membrane-spanning segments follow: residues 124 to 144 (GFLA…WNGW) and 190 to 210 (ILLF…CFWI). Residue aspartate 272 is part of the active site. Substrate is bound by residues aspartate 331 and aspartate 333. The active site involves aspartate 425. 4 consecutive transmembrane segments (helical) span residues 503 to 523 (LILP…TMFV), 528 to 548 (LPVW…ILPS), 653 to 668 (LALS…RSLL), and 673 to 693 (IHFY…LDLI).

The protein belongs to the glycosyltransferase 2 family. Plant cellulose synthase-like C subfamily.

It localises to the golgi apparatus membrane. Probable beta-1,4-glucan synthase rather involved in the synthesis of the xyloglucan backbone than cellulose. Seems to work simultaneously with xyloglucan 6-xylosyltransferase. Xyloglucan is a noncellulosic polysaccharides of plant cell wall and consists of a glucan backbone substituted by xylose, galactose and fucose. The polypeptide is Probable xyloglucan glycosyltransferase 2 (CSLC2) (Oryza sativa subsp. japonica (Rice)).